Reading from the N-terminus, the 579-residue chain is Zinc finger protein 248 (579 aa).

The 72-residue stretch at 8–79 folds into the KRAB domain; the sequence is VSFKDVCVDF…EKGFPSQCHP (72 aa). A C2H2-type 1; degenerate zinc finger spans residues 240 to 264; sequence TVCKYNECGRTFIESLKLNISQRPH. Residue K341 forms a Glycyl lysine isopeptide (Lys-Gly) (interchain with G-Cter in SUMO2) linkage. 7 C2H2-type zinc fingers span residues 380–402, 408–430, 436–458, 464–486, 492–514, 520–543, and 548–570; these read FECGECGKTFWEKSNLTQHQRTH, YECTECGKAFCQKPHLTNHQRTH, YECKQCGKTFCVKSNLTEHQRTH, YECNACGKSFCHRSALTVHQRTH, FICNECGKSFCVKSNLIVHQRTH, YKCNECGKTFCEKSALTKHQRTHT, and YECNACGKTFSQRSVLTKHQRIH.

Belongs to the krueppel C2H2-type zinc-finger protein family.

Its subcellular location is the nucleus. In terms of biological role, may be involved in transcriptional regulation. The sequence is that of Zinc finger protein 248 (ZNF248) from Homo sapiens (Human).